A 51-amino-acid polypeptide reads, in one-letter code: Large ribosomal subunit protein eL39 (51 aa).

A disordered region spans residues Lys-32–Ala-51.

This sequence belongs to the eukaryotic ribosomal protein eL39 family.

The protein is Large ribosomal subunit protein eL39 of Pyrobaculum arsenaticum (strain DSM 13514 / JCM 11321 / PZ6).